Consider the following 422-residue polypeptide: Glutamate-1-semialdehyde 2,1-aminomutase (422 aa).

K265 carries the N6-(pyridoxal phosphate)lysine modification.

The protein belongs to the class-III pyridoxal-phosphate-dependent aminotransferase family. HemL subfamily. Requires pyridoxal 5'-phosphate as cofactor.

Its subcellular location is the cytoplasm. The catalysed reaction is (S)-4-amino-5-oxopentanoate = 5-aminolevulinate. It functions in the pathway porphyrin-containing compound metabolism; protoporphyrin-IX biosynthesis; 5-aminolevulinate from L-glutamyl-tRNA(Glu): step 2/2. This chain is Glutamate-1-semialdehyde 2,1-aminomutase, found in Methanococcoides burtonii (strain DSM 6242 / NBRC 107633 / OCM 468 / ACE-M).